Here is a 576-residue protein sequence, read N- to C-terminus: MAGUK p55 subfamily member 2 (576 aa).

2 consecutive L27 domains span residues 8–60 (SETA…FMQQ) and 84–142 (LEAV…YETP). A Phosphoserine modification is found at Ser42. A Phosphothreonine modification is found at Thr141. Ser145 bears the Phosphoserine mark. The PDZ domain occupies 185–240 (ELVIARILHGGMVAQQGLLHVGDIIKEVNGQPVGSDPRALQELLRNASGSVILKIL). Positions 249–317 (PRQVFVKCHF…PSQLLEEKRK (69 aa)) constitute an SH3 domain. The Guanylate kinase-like domain maps to 374–561 (RKTLVLIGAQ…TFRELQTAME (188 aa)).

It belongs to the MAGUK family. As to quaternary structure, can homomultimerise. Interacts with CACNG2. Interacts (via the SH3-Guanylate kinase-like sub-module) with DLG4/PSD95 and DLGAP1/GKAP. Interacts (via the PDZ domain) with CADM1 (via C-terminus). Interacts with KCNN2/SK2 (via N-terminal domain). Interacts with SRC. In terms of processing, phosphorylated by SRC.

The protein resides in the cytoplasm. It is found in the cytoskeleton. Its subcellular location is the membrane. The protein localises to the cell projection. It localises to the dendrite. The protein resides in the postsynaptic density. Postsynaptic MAGUK scaffold protein that links CADM1 cell adhesion molecules to core components of the postsynaptic density. In CA1 pyramidal neurons, required for synaptic KCNN2-containing channel function and long-term potentiation expression. Seems to negatively regulate SRC function in epithelial cells. The chain is MAGUK p55 subfamily member 2 from Homo sapiens (Human).